A 122-amino-acid chain; its full sequence is MADNDRTALRRKALRRGLMSEYVAAVFLMLKGYRILALRHRTRLGEIDIIARKGDLAVFVEVKARHGEAAAVDAVSVIAQKRIRAASDLWLARQADQARLSQRYDIVAVMPGRLPRHFPDAF.

It belongs to the UPF0102 family.

This is UPF0102 protein Rleg2_4331 from Rhizobium leguminosarum bv. trifolii (strain WSM2304).